A 303-amino-acid polypeptide reads, in one-letter code: Glycine--tRNA ligase alpha subunit (303 aa).

This sequence belongs to the class-II aminoacyl-tRNA synthetase family. In terms of assembly, tetramer of two alpha and two beta subunits.

It localises to the cytoplasm. It carries out the reaction tRNA(Gly) + glycine + ATP = glycyl-tRNA(Gly) + AMP + diphosphate. This Klebsiella pneumoniae (strain 342) protein is Glycine--tRNA ligase alpha subunit.